The sequence spans 91 residues: MTRSLKKGPFCDAHLVKKVETAQAIKDKKPIKTWSRRSTIMPDFIGLTIAVHNGKQHVPVYVSENMVGHKLGEFALTRTFKGHAADKKAKK.

This sequence belongs to the universal ribosomal protein uS19 family.

In terms of biological role, protein S19 forms a complex with S13 that binds strongly to the 16S ribosomal RNA. This Janthinobacterium sp. (strain Marseille) (Minibacterium massiliensis) protein is Small ribosomal subunit protein uS19.